Here is a 436-residue protein sequence, read N- to C-terminus: Enolase (436 aa).

Position 167 (Gln167) interacts with (2R)-2-phosphoglycerate. Glu209 (proton donor) is an active-site residue. Mg(2+) is bound by residues Asp246, Glu291, and Asp318. (2R)-2-phosphoglycerate contacts are provided by Lys343, Arg372, Ser373, and Lys394. Residue Lys343 is the Proton acceptor of the active site.

The protein belongs to the enolase family. As to quaternary structure, component of the RNA degradosome, a multiprotein complex involved in RNA processing and mRNA degradation. It depends on Mg(2+) as a cofactor.

The protein resides in the cytoplasm. It localises to the secreted. The protein localises to the cell surface. It catalyses the reaction (2R)-2-phosphoglycerate = phosphoenolpyruvate + H2O. It functions in the pathway carbohydrate degradation; glycolysis; pyruvate from D-glyceraldehyde 3-phosphate: step 4/5. Its function is as follows. Catalyzes the reversible conversion of 2-phosphoglycerate (2-PG) into phosphoenolpyruvate (PEP). It is essential for the degradation of carbohydrates via glycolysis. The chain is Enolase from Haemophilus influenzae (strain PittGG).